A 154-amino-acid chain; its full sequence is Lipoprotein signal peptidase (154 aa).

Helical transmembrane passes span 55–75 (GHMWFFYLITVIVIGIIIYIM) and 84–104 (LFSISLAFILGGAIGNFIDRV). Active-site residues include D111 and D129. A helical membrane pass occupies residues 124 to 144 (IFNVADASLSVGVVLMLVYVF).

It belongs to the peptidase A8 family.

It localises to the cell membrane. It catalyses the reaction Release of signal peptides from bacterial membrane prolipoproteins. Hydrolyzes -Xaa-Yaa-Zaa-|-(S,diacylglyceryl)Cys-, in which Xaa is hydrophobic (preferably Leu), and Yaa (Ala or Ser) and Zaa (Gly or Ala) have small, neutral side chains.. It participates in protein modification; lipoprotein biosynthesis (signal peptide cleavage). In terms of biological role, this protein specifically catalyzes the removal of signal peptides from prolipoproteins. The sequence is that of Lipoprotein signal peptidase from Listeria welshimeri serovar 6b (strain ATCC 35897 / DSM 20650 / CCUG 15529 / CIP 8149 / NCTC 11857 / SLCC 5334 / V8).